The sequence spans 425 residues: Protein disulfide isomerase-like 5-3 (425 aa).

The signal sequence occupies residues 1–28 (MGKPTLPPVVVVVVLLLLVVVLPATTCG). Residues 29–153 (ADAGGGGEAE…LVENLKKLVA (125 aa)) form the Thioredoxin domain. Active-site nucleophile residues include cysteine 75 and cysteine 78. Residues cysteine 75 and cysteine 78 are joined by a disulfide bond. Residues 386–406 (LLGVNAVYILVFLVAVLVLLM) traverse the membrane as a helical segment.

It belongs to the protein disulfide isomerase family.

Its subcellular location is the membrane. Functionally, acts as a protein-folding catalyst that interacts with nascent polypeptides to catalyze the formation, isomerization, and reduction or oxidation of disulfide bonds. May play a role in storage protein biogenesis. In Oryza sativa subsp. japonica (Rice), this protein is Protein disulfide isomerase-like 5-3 (PDIL5-3).